The primary structure comprises 122 residues: Large ribosomal subunit protein uL14 (122 aa).

The protein belongs to the universal ribosomal protein uL14 family. As to quaternary structure, part of the 50S ribosomal subunit. Forms a cluster with proteins L3 and L19. In the 70S ribosome, L14 and L19 interact and together make contacts with the 16S rRNA in bridges B5 and B8.

Functionally, binds to 23S rRNA. Forms part of two intersubunit bridges in the 70S ribosome. This Frankia alni (strain DSM 45986 / CECT 9034 / ACN14a) protein is Large ribosomal subunit protein uL14.